Here is a 253-residue protein sequence, read N- to C-terminus: Ribosome maturation factor RimP (253 aa).

Residues 186-199 (RRGKAAEREKKRDL) show a composition bias toward basic and acidic residues. Residues 186-253 (RRGKAAEREK…RARRGEIDPD (68 aa)) are disordered. Over residues 201 to 216 (LAPPLAPHAKPAAQAK) the composition is skewed to low complexity. The segment covering 240 to 253 (LAADRARRGEIDPD) has biased composition (basic and acidic residues).

This sequence belongs to the RimP family.

It is found in the cytoplasm. Required for maturation of 30S ribosomal subunits. The sequence is that of Ribosome maturation factor RimP from Bradyrhizobium sp. (strain BTAi1 / ATCC BAA-1182).